The sequence spans 535 residues: uncharacterized protein (535 aa).

Residues 1–34 are disordered; the sequence is MKAIDNQIRNISSSHQDKHSDKVNSHQHHGKVDK. Over residues 15–34 the composition is skewed to basic and acidic residues; that stretch reads HQDKHSDKVNSHQHHGKVDK.

This is an uncharacterized protein from Escherichia coli (strain K12).